A 437-amino-acid chain; its full sequence is Glucose-1-phosphate adenylyltransferase (437 aa).

Residues tyrosine 113, glycine 179, 194 to 195 (EK), and serine 212 contribute to the alpha-D-glucose 1-phosphate site.

The protein belongs to the bacterial/plant glucose-1-phosphate adenylyltransferase family. In terms of assembly, homotetramer.

The enzyme catalyses alpha-D-glucose 1-phosphate + ATP + H(+) = ADP-alpha-D-glucose + diphosphate. It functions in the pathway glycan biosynthesis; glycogen biosynthesis. Its function is as follows. Involved in the biosynthesis of ADP-glucose, a building block required for the elongation reactions to produce glycogen. Catalyzes the reaction between ATP and alpha-D-glucose 1-phosphate (G1P) to produce pyrophosphate and ADP-Glc. This chain is Glucose-1-phosphate adenylyltransferase, found in Haemophilus influenzae (strain ATCC 51907 / DSM 11121 / KW20 / Rd).